Reading from the N-terminus, the 415-residue chain is Trehalose synthase (415 aa).

Belongs to the glycosyltransferase group 1 family. Glycosyltransferase 4 subfamily. In terms of assembly, homodimer. Mg(2+) serves as cofactor.

It carries out the reaction an NDP-alpha-D-glucose + D-glucose = alpha,alpha-trehalose + a ribonucleoside 5'-diphosphate + H(+). Its function is as follows. Synthesizes trehalose from ADP-, UDP- or GDP-glucose and glucose. The protein is Trehalose synthase of Pyrococcus horikoshii (strain ATCC 700860 / DSM 12428 / JCM 9974 / NBRC 100139 / OT-3).